The primary structure comprises 188 residues: Nicotinamide-nucleotide adenylyltransferase (188 aa).

This sequence belongs to the archaeal NMN adenylyltransferase family.

It localises to the cytoplasm. The catalysed reaction is beta-nicotinamide D-ribonucleotide + ATP + H(+) = diphosphate + NAD(+). The protein operates within cofactor biosynthesis; NAD(+) biosynthesis; NAD(+) from nicotinamide D-ribonucleotide: step 1/1. In Pyrococcus furiosus (strain ATCC 43587 / DSM 3638 / JCM 8422 / Vc1), this protein is Nicotinamide-nucleotide adenylyltransferase.